Here is a 111-residue protein sequence, read N- to C-terminus: Small ribosomal subunit protein uS10 (111 aa).

This sequence belongs to the universal ribosomal protein uS10 family. In terms of assembly, part of the 30S ribosomal subunit.

Its function is as follows. Involved in the binding of tRNA to the ribosomes. In Xanthomonas euvesicatoria pv. vesicatoria (strain 85-10) (Xanthomonas campestris pv. vesicatoria), this protein is Small ribosomal subunit protein uS10.